The following is a 359-amino-acid chain: tRNA-specific 2-thiouridylase MnmA (359 aa).

ATP is bound by residues 6–13 (AMSGGVDS) and leucine 32. Catalysis depends on cysteine 97, which acts as the Nucleophile. Cysteine 97 and cysteine 195 form a disulfide bridge. Glycine 121 provides a ligand contact to ATP. The interval 144–146 (KDQ) is interaction with tRNA. The active-site Cysteine persulfide intermediate is cysteine 195.

Belongs to the MnmA/TRMU family.

Its subcellular location is the cytoplasm. The catalysed reaction is S-sulfanyl-L-cysteinyl-[protein] + uridine(34) in tRNA + AH2 + ATP = 2-thiouridine(34) in tRNA + L-cysteinyl-[protein] + A + AMP + diphosphate + H(+). Catalyzes the 2-thiolation of uridine at the wobble position (U34) of tRNA, leading to the formation of s(2)U34. The protein is tRNA-specific 2-thiouridylase MnmA of Tropheryma whipplei (strain TW08/27) (Whipple's bacillus).